The sequence spans 326 residues: Tetraacyldisaccharide 4'-kinase (326 aa).

ATP is bound at residue 53-60 (SVGGNGKT).

The protein belongs to the LpxK family.

The catalysed reaction is a lipid A disaccharide + ATP = a lipid IVA + ADP + H(+). It participates in glycolipid biosynthesis; lipid IV(A) biosynthesis; lipid IV(A) from (3R)-3-hydroxytetradecanoyl-[acyl-carrier-protein] and UDP-N-acetyl-alpha-D-glucosamine: step 6/6. In terms of biological role, transfers the gamma-phosphate of ATP to the 4'-position of a tetraacyldisaccharide 1-phosphate intermediate (termed DS-1-P) to form tetraacyldisaccharide 1,4'-bis-phosphate (lipid IVA). This is Tetraacyldisaccharide 4'-kinase from Actinobacillus pleuropneumoniae serotype 5b (strain L20).